We begin with the raw amino-acid sequence, 38 residues long: Large ribosomal subunit protein bL36 (38 aa).

It belongs to the bacterial ribosomal protein bL36 family.

This chain is Large ribosomal subunit protein bL36, found in Paraburkholderia phymatum (strain DSM 17167 / CIP 108236 / LMG 21445 / STM815) (Burkholderia phymatum).